The chain runs to 630 residues: MSSERVLSYAPAFKSFLDTSFFQELSRLKLDVLKLDSTCQPLTVNLDLHNIPKSADQVPLFLTNRSFEKHNNKRTNEVPLQGSIFNFNVLDEFKNLDKQLFLHQRALECWEDGIKDINKCVSFVIISFADLKKYRFYYWLGVPCFQRPSSTVLHVRPEPSLKGLFSKCQKWFDVNYSKWVCILDADDEIVNYDKCIIRKTKVLAIRDTSTMENVPSALTKNFLSVLQYDVPDLIDFKLLIIRQNEGSFALNATFASIDPQSSSSNPDMKVSGWERNVQGKLAPRVVDLSSLLDPLKIADQSVDLNLKLMKWRILPDLNLDIIKNTKVLLLGAGTLGCYVSRALIAWGVRKITFVDNGTVSYSNPVRQALYNFEDCGKPKAELAAASLKRIFPLMDATGVKLSIPMIGHKLVNEEAQHKDFDRLRALIKEHDIIFLLVDSRESRWLPSLLSNIENKTVINAALGFDSYLVMRHGNRDEQSSKQLGCYFCHDVVAPTDSLTDRTLDQMCTVTRPGVAMMASSLAVELMTSLLQTKYSGSETTVLGDIPHQIRGFLHNFSILKLETPAYEHCPACSPKVIEAFTDLGWEFVKKALEHPLYLEEISGLSVIKQEVERLGNDVFEWEDDESDEIA.

Positions 331–336 (GAGTLG) match the GXGXXG motif motif. Cys507 acts as the Glycyl thioester intermediate in catalysis. The interval 591-630 (ALEHPLYLEEISGLSVIKQEVERLGNDVFEWEDDESDEIA) is homodimerization.

It belongs to the ATG7 family. Homodimer; homodimerization is required for ATP-binding. Interacts with ATG8 through a thioester bond between Cys-507 and the C-terminal 'Gly-116' of ATG8 and with ATG12 through a thioester bond between Cys-507 and the C-terminal 'Gly-186' of ATG12. Also interacts with ATG3.

It localises to the cytoplasm. Its subcellular location is the preautophagosomal structure. In terms of biological role, E1-like activating enzyme involved in the 2 ubiquitin-like systems required for cytoplasm to vacuole transport (Cvt) and autophagy. Activates ATG12 for its conjugation with ATG5 and ATG8 for its conjugation with phosphatidylethanolamine. Both systems are needed for the ATG8 association to Cvt vesicles and autophagosomes membranes. Autophagy is essential for maintenance of amino acid levels and protein synthesis under nitrogen starvation. Required for selective autophagic degradation of the nucleus (nucleophagy) as well as for mitophagy which contributes to regulate mitochondrial quantity and quality by eliminating the mitochondria to a basal level to fulfill cellular energy requirements and preventing excess ROS production. Plays a role in the regulation of filamentous growth and chronological longevity. The sequence is that of Ubiquitin-like modifier-activating enzyme ATG7 (ATG7) from Saccharomyces cerevisiae (strain ATCC 204508 / S288c) (Baker's yeast).